Here is a 159-residue protein sequence, read N- to C-terminus: Putative pre-16S rRNA nuclease (159 aa).

It belongs to the YqgF nuclease family.

The protein resides in the cytoplasm. Functionally, could be a nuclease involved in processing of the 5'-end of pre-16S rRNA. In Bartonella quintana (strain Toulouse) (Rochalimaea quintana), this protein is Putative pre-16S rRNA nuclease.